The primary structure comprises 648 residues: Primary amine oxidase (648 aa).

Positions 1–9 (MTLNAESEA) are excised as a propeptide. A substrate-binding site is contributed by 299 to 310 (AFDSGEYNIGNM). Aspartate 301 serves as the catalytic Proton acceptor. Cysteine 320 and cysteine 346 are disulfide-bonded. 382–387 (VANYEY) lines the substrate pocket. Catalysis depends on tyrosine 385, which acts as the Schiff-base intermediate with substrate; via topaquinone. The residue at position 385 (tyrosine 385) is a 2',4',5'-topaquinone. 2 residues coordinate Cu cation: histidine 436 and histidine 438. Residues aspartate 445, phenylalanine 446, and aspartate 584 each contribute to the Mn(2+) site. Histidine 595 is a Cu cation binding site.

It belongs to the copper/topaquinone oxidase family. As to quaternary structure, homodimer. The cofactor is Cu cation. Zn(2+) serves as cofactor. L-topaquinone is required as a cofactor. Requires Mn(2+) as cofactor. Post-translationally, topaquinone (TPQ) is generated by copper-dependent autoxidation of a specific tyrosyl residue.

The enzyme catalyses a primary methyl amine + O2 + H2O = an aldehyde + H2O2 + NH4(+). In terms of biological role, the exact function of MaoXI is not known. The sequence is that of Primary amine oxidase (maoI) from Arthrobacter sp. (strain P1).